Reading from the N-terminus, the 522-residue chain is Glucose-1-phosphate adenylyltransferase large subunit 1, chloroplastic (522 aa).

A chloroplast-targeting transit peptide spans 1–54 (MVVSADCRISLSAPSCIRSSSTGLTRHIKLGSFCNGELMGKKLNLSQLPNIRLR). Ser-428 is modified (phosphoserine).

It belongs to the bacterial/plant glucose-1-phosphate adenylyltransferase family. In terms of assembly, heterotetramer. Leaves.

It is found in the plastid. The protein resides in the chloroplast. It carries out the reaction alpha-D-glucose 1-phosphate + ATP + H(+) = ADP-alpha-D-glucose + diphosphate. Its pathway is glycan biosynthesis; starch biosynthesis. Its activity is regulated as follows. Activated by 3'phosphoglycerate, inhibited by orthophosphate. Allosteric regulation. This protein plays a role in synthesis of starch. It catalyzes the synthesis of the activated glycosyl donor, ADP-glucose from Glc-1-P and ATP. The chain is Glucose-1-phosphate adenylyltransferase large subunit 1, chloroplastic (ADG2) from Arabidopsis thaliana (Mouse-ear cress).